We begin with the raw amino-acid sequence, 538 residues long: Carotenoid 9,10(9',10')-cleavage dioxygenase 1 (538 aa).

The Fe cation site is built by histidine 222, histidine 270, histidine 336, and histidine 523.

It belongs to the carotenoid oxygenase family. In terms of assembly, homodimer. It depends on Fe(2+) as a cofactor. In terms of tissue distribution, high expression in flowers and siliques. Also detected in stems, leaves and roots.

It localises to the cytoplasm. It carries out the reaction all-trans-zeaxanthin + 2 O2 = 4,9-dimethyldodeca-2,4,6,8,10-pentaenedial + 2 (3R)-hydroxy-beta-ionone. In terms of biological role, cleaves a variety of carotenoids symmetrically at both the 9-10 and 9'-10' double bonds. Active on beta,beta-carotene, lutein, zeaxanthin, all-trans-violaxanthin, 9-cis-violaxanthin and 9'-cis-neoxanthin. With most substrates, the carotenoid is symmetrically cleaved. Probably not involved in abscisic acid biosynthesis. The polypeptide is Carotenoid 9,10(9',10')-cleavage dioxygenase 1 (CCD1) (Arabidopsis thaliana (Mouse-ear cress)).